We begin with the raw amino-acid sequence, 801 residues long: Na(+)/H(+) antiporter subunit A1 (801 aa).

The next 19 helical transmembrane spans lie at 1-21 (MSLL…IPIL), 28-48 (IHLG…MLTL), 79-99 (LGLL…LYSI), 117-137 (LFMG…LYLF), 166-186 (LIIT…LAIP), 206-226 (PFFI…SAQF), 265-285 (IFAA…ITLF), 300-320 (ILAF…GIGA), 337-357 (FTAA…LFMI), 373-393 (LGGL…TALS), 427-447 (LGYL…VYSI), 472-492 (ILML…GLFP), 522-542 (GLTP…LLIV), 591-611 (LVII…SVPF), 623-643 (IFEV…LFAK), 646-666 (LFSI…FIFF), 671-691 (LALT…LCFY), 707-727 (LTNA…GLIA), and 764-784 (MDTL…YTMI).

Belongs to the CPA3 antiporters (TC 2.A.63) subunit A family. In terms of assembly, may form a heterooligomeric complex that consists of seven subunits: mnhA1, mnhB1, mnhC1, mnhD1, mnhE1, mnhF1 and mnhG1.

It is found in the cell membrane. Functionally, mnh complex is a Na(+)/H(+) antiporter involved in Na(+) excretion. The chain is Na(+)/H(+) antiporter subunit A1 (mnhA1) from Staphylococcus aureus (strain Mu3 / ATCC 700698).